We begin with the raw amino-acid sequence, 76 residues long: Kappa-actitoxin-Avd4c (76 aa).

Positions 1–19 are cleaved as a signal peptide; that stretch reads MNKALFLCLVVLCAAVVFA. Residues 20-31 constitute a propeptide that is removed on maturation; it reads AEDLQKAKHAPF. 3 disulfide bridges follow: cysteine 37-cysteine 72, cysteine 39-cysteine 65, and cysteine 55-cysteine 73.

It belongs to the sea anemone type 3 (BDS) potassium channel toxin family. As to expression, moderately expressed in the ectodermal tissue from the distal and proximal tentacles, body wall, and oral disk.

It localises to the secreted. The protein resides in the nematocyst. Its function is as follows. Blocks Kv3 voltage-gated potassium channels. Reduces blood pressure. The polypeptide is Kappa-actitoxin-Avd4c (Anemonia viridis (Snakelocks anemone)).